The following is a 276-amino-acid chain: Ice-binding protein (276 aa).

The N-terminal stretch at 1-24 (MKILKRIPVLAVLLVGLMTNCSND) is a signal peptide. The Ice-binding site motif (T-A/G-X-T/N) 1 motif lies at 79 to 82 (TGIT). The cysteines at positions 107 and 124 are disulfide-linked. 2 consecutive short sequence motifs (ice-binding site motif (T-A/G-X-T/N)) follow at residues 245–248 (TGIN) and 263–266 (TAVT).

The protein belongs to the ice-binding protein family. Monomer.

The protein resides in the secreted. Its function is as follows. Has antifreeze activity for survival in a subzero environment. Binds to the surface of ice crystals and inhibits their growth. Has high thermal hysteresis (TH) activity, which is the ability to lower the freezing point of an aqueous solution below its melting point, and thus the freezing of the cell fluid can be prevented protecting the organism from ice damage. The TH activity of this protein is 2.2 degrees Celsius at 5 uM and 2.5 degrees Celsius at 50 uM. The polypeptide is Ice-binding protein (Flavobacterium frigoris (strain PS1)).